The primary structure comprises 291 residues: Ribonuclease Z (291 aa).

Zn(2+)-binding residues include His60, His62, Asp64, His65, His132, Asp200, and His256. The active-site Proton acceptor is Asp64.

It belongs to the RNase Z family. Homodimer. The cofactor is Zn(2+).

The enzyme catalyses Endonucleolytic cleavage of RNA, removing extra 3' nucleotides from tRNA precursor, generating 3' termini of tRNAs. A 3'-hydroxy group is left at the tRNA terminus and a 5'-phosphoryl group is left at the trailer molecule.. Zinc phosphodiesterase, which displays some tRNA 3'-processing endonuclease activity. Probably involved in tRNA maturation, by removing a 3'-trailer from precursor tRNA. The protein is Ribonuclease Z of Metallosphaera sedula (strain ATCC 51363 / DSM 5348 / JCM 9185 / NBRC 15509 / TH2).